The chain runs to 92 residues: DNA-directed RNA polymerase subunit omega (92 aa).

This sequence belongs to the RNA polymerase subunit omega family. In terms of assembly, the RNAP catalytic core consists of 2 alpha, 1 beta, 1 beta' and 1 omega subunit. When a sigma factor is associated with the core the holoenzyme is formed, which can initiate transcription.

The enzyme catalyses RNA(n) + a ribonucleoside 5'-triphosphate = RNA(n+1) + diphosphate. In terms of biological role, promotes RNA polymerase assembly. Latches the N- and C-terminal regions of the beta' subunit thereby facilitating its interaction with the beta and alpha subunits. This is DNA-directed RNA polymerase subunit omega from Shewanella amazonensis (strain ATCC BAA-1098 / SB2B).